The primary structure comprises 326 residues: MENVFDYEDIQLIPAKCIVKSRSECDTSVQFGGRTFKLPVVPANMQTIIDEKLAVSLAENGYFYVMHRFEPETRIDFIKDMKARGLFSSISVGVKDEEYAFIEELTRENLTPEYITIDIAHGHSNAVINMIQHIKKHLPDSFVIAGNVGTPEAVRELENAGADATKVGIGPGKVCITKIKTGFGTGGWQLAALRWCAKAASKPIIADGGIRTHGDIAKSVRFGATMVMIGSLFAGHEESPGATIEKDGKLYKEYFGSASEYQKGEKKNVEGKKMYVEHKGAIMDTLTEMEQDLQSSISYAGGNKLDAIRNVDYVIVKNSIFNGDQY.

Cysteine 175 (thioimidate intermediate) is an active-site residue. Position 204–227 (204–227 (IIADGGIRTHGDIAKSVRFGATMV)) interacts with NADP(+).

This sequence belongs to the IMPDH/GMPR family. GuaC type 2 subfamily.

It carries out the reaction IMP + NH4(+) + NADP(+) = GMP + NADPH + 2 H(+). In terms of biological role, catalyzes the irreversible NADPH-dependent deamination of GMP to IMP. It functions in the conversion of nucleobase, nucleoside and nucleotide derivatives of G to A nucleotides, and in maintaining the intracellular balance of A and G nucleotides. The protein is GMP reductase of Bacillus licheniformis (strain ATCC 14580 / DSM 13 / JCM 2505 / CCUG 7422 / NBRC 12200 / NCIMB 9375 / NCTC 10341 / NRRL NRS-1264 / Gibson 46).